Consider the following 679-residue polypeptide: UvrABC system protein B (679 aa).

Positions 25–412 (EGVNQGQRYQ…DGHLAEQVIR (388 aa)) constitute a Helicase ATP-binding domain. ATP is bound at residue 38–45 (GATGTGKT). A Beta-hairpin motif is present at residues 91 to 114 (YYDYYQPEAYVPVSDTYIAKTSSI). The 163-residue stretch at 429 to 591 (QVDDLLAEIR…IVPRPAGKRA (163 aa)) folds into the Helicase C-terminal domain. The region spanning 639–674 (PELIDQLETKMKEAAKNLNFEEAASLRDRIKKFRQK) is the UVR domain.

This sequence belongs to the UvrB family. Forms a heterotetramer with UvrA during the search for lesions. Interacts with UvrC in an incision complex.

The protein resides in the cytoplasm. Its function is as follows. The UvrABC repair system catalyzes the recognition and processing of DNA lesions. A damage recognition complex composed of 2 UvrA and 2 UvrB subunits scans DNA for abnormalities. Upon binding of the UvrA(2)B(2) complex to a putative damaged site, the DNA wraps around one UvrB monomer. DNA wrap is dependent on ATP binding by UvrB and probably causes local melting of the DNA helix, facilitating insertion of UvrB beta-hairpin between the DNA strands. Then UvrB probes one DNA strand for the presence of a lesion. If a lesion is found the UvrA subunits dissociate and the UvrB-DNA preincision complex is formed. This complex is subsequently bound by UvrC and the second UvrB is released. If no lesion is found, the DNA wraps around the other UvrB subunit that will check the other stand for damage. This Prochlorococcus marinus (strain MIT 9313) protein is UvrABC system protein B.